The sequence spans 785 residues: Endonuclease MutS2 (785 aa).

Gly332–Thr339 contacts ATP. Residues Ile710–Lys785 form the Smr domain.

It belongs to the DNA mismatch repair MutS family. MutS2 subfamily. Homodimer. Binds to stalled ribosomes, contacting rRNA.

Endonuclease that is involved in the suppression of homologous recombination and thus may have a key role in the control of bacterial genetic diversity. Its function is as follows. Acts as a ribosome collision sensor, splitting the ribosome into its 2 subunits. Detects stalled/collided 70S ribosomes which it binds and splits by an ATP-hydrolysis driven conformational change. Acts upstream of the ribosome quality control system (RQC), a ribosome-associated complex that mediates the extraction of incompletely synthesized nascent chains from stalled ribosomes and their subsequent degradation. Probably generates substrates for RQC. The protein is Endonuclease MutS2 of Clostridium botulinum (strain Eklund 17B / Type B).